Consider the following 148-residue polypeptide: uncharacterized protein (148 aa).

Residues 3–64 form the HTH asnC-type domain; sequence IDDLDRKILS…KLNYEKLGYE (62 aa). A DNA-binding region (H-T-H motif) is located at residues 22–41; that stretch reads YREIAKKLNVAVGTIYNRIK.

This is an uncharacterized protein from Pyrococcus furiosus (strain ATCC 43587 / DSM 3638 / JCM 8422 / Vc1).